The primary structure comprises 559 residues: AP-4 complex accessory subunit tepsin (559 aa).

An ENTH domain is found at 2 to 135 (LDRLAFLQQL…FSESIPSPSH (134 aa)). 3 disordered regions span residues 131–157 (PSPSHTVSAKERSQSGMGSQASSAPAL), 214–290 (AIPS…ESLD), and 472–491 (PNGAANQKNPNGSTEKSDPA). 2 stretches are compositionally biased toward low complexity: residues 144–154 (QSGMGSQASSA) and 266–281 (SRSSDVGSKSGSDGQS). The segment covering 472–485 (PNGAANQKNPNGST) has biased composition (polar residues).

It localises to the golgi apparatus. The protein localises to the trans-Golgi network membrane. Its subcellular location is the cytoplasmic vesicle. The protein resides in the cytoplasm. It is found in the cytosol. May play a role in vesicular trafficking of proteins at the trans-Golgi network. The protein is AP-4 complex accessory subunit tepsin of Xenopus laevis (African clawed frog).